A 349-amino-acid chain; its full sequence is Putative phytanoyl-CoA dioxygenase (349 aa).

Residues Lys-118 and 169-171 contribute to the 2-oxoglutarate site; that span reads HLD. Residues His-169 and Asp-171 each coordinate Fe cation.

Belongs to the PhyH family. Requires Fe cation as cofactor. L-ascorbate serves as cofactor.

It carries out the reaction phytanoyl-CoA + 2-oxoglutarate + O2 = 2-hydroxyphytanoyl-CoA + succinate + CO2. The protein operates within lipid metabolism; fatty acid metabolism. Converts phytanoyl-CoA to 2-hydroxyphytanoyl-CoA. The protein is Putative phytanoyl-CoA dioxygenase of Dictyostelium discoideum (Social amoeba).